Reading from the N-terminus, the 877-residue chain is GPI ethanolamine phosphate transferase 2 (877 aa).

N-linked (GlcNAc...) asparagine glycosylation is found at Asn190 and Asn368. Transmembrane regions (helical) follow at residues 409-429 (VDIYIGLSILVAMAIVAFGLF), 443-463 (YNWYFIGISIVYSIHFHASSL), 464-484 (IEEEYQIWWFFSIICLFALYF), 528-548 (VDLLWVLNIATYFLTAILIYS), and 570-590 (DFGSLVTFIVTFVTCSISFSF). N-linked (GlcNAc...) asparagine glycosylation occurs at Asn611. A run of 6 helical transmembrane segments spans residues 634 to 654 (IHLSKILFYCIGVLIIVRIVL), 683 to 703 (EIVPIFLIFSLVKFSAAKLLA), 716 to 736 (LMIIITLFSLCMQNLSFFSMG), 758 to 778 (VFLVGVLTYCSNFAGPIFWSL), 817 to 837 (LAGFLFYSMAGLSLVASCFNL), and 854 to 876 (FASWTLLTNILIDTISSLSILAL).

The protein belongs to the PIGG/PIGN/PIGO family. PIGG subfamily.

Its subcellular location is the endoplasmic reticulum membrane. The protein operates within glycolipid biosynthesis; glycosylphosphatidylinositol-anchor biosynthesis. Functionally, ethanolamine phosphate transferase involved in glycosylphosphatidylinositol-anchor biosynthesis. Transfers ethanolamine phosphate to the GPI second mannose. This chain is GPI ethanolamine phosphate transferase 2 (LAS21), found in Debaryomyces hansenii (strain ATCC 36239 / CBS 767 / BCRC 21394 / JCM 1990 / NBRC 0083 / IGC 2968) (Yeast).